The following is a 212-amino-acid chain: Ras-related protein Rab-43 (212 aa).

Position 25–32 (25–32) interacts with GTP; the sequence is GDASVGKT. The short motif at 47–55 is the Effector region element; that stretch reads QGSTIGVDF. Ser49 is subject to Phosphoserine. 73 to 77 is a binding site for GTP; sequence DTAGQ. Phosphothreonine; by LRRK2 is present on Thr82. Residues 131–134 and 163–164 each bind GTP; these read NKSD and AK. Ser193 bears the Phosphoserine mark. Residues Cys210 and Cys212 are each lipidated (S-geranylgeranyl cysteine). Cysteine methyl ester is present on Cys212.

The protein belongs to the small GTPase superfamily. Rab family. In terms of assembly, interacts with GDI1, GDI2, CHM and CHML; phosphorylation at Thr-82 disrupts these interactions. Widely expressed in brain, testis, lung, heart, ovary, colon, kidney, uterus and spleen but not in liver.

It localises to the cytoplasmic vesicle. It is found in the phagosome. The protein localises to the phagosome membrane. The protein resides in the golgi apparatus. Its subcellular location is the trans-Golgi network membrane. It localises to the trans-Golgi network. Its function is as follows. The small GTPases Rab are key regulators of intracellular membrane trafficking, from the formation of transport vesicles to their fusion with membranes. Rabs cycle between an inactive GDP-bound form and an active GTP-bound form that is able to recruit to membranes different set of downstream effectors directly responsible for vesicle formation, movement, tethering and fusion. The low intrinsic GTPase activity of RAB43 is activated by USP6NL. Involved in retrograde transport from the endocytic pathway to the Golgi apparatus. Involved in the transport of Shiga toxin from early and recycling endosomes to the trans-Golgi network. Required for the structural integrity of the Golgi complex. Plays a role in the maturation of phagosomes that engulf pathogens, such as S.aureus and M.tuberculosis. The protein is Ras-related protein Rab-43 (RAB43) of Homo sapiens (Human).